The primary structure comprises 841 residues: Probable alpha-glucuronidase A (841 aa).

An N-terminal signal peptide occupies residues 1–20 (MRGLNLFQLILALLLSMVAA). Asn51, Asn76, Asn85, Asn149, Asn222, Asn279, Asn310, Asn343, Asn450, Asn465, Asn527, Asn576, Asn682, Asn723, and Asn732 each carry an N-linked (GlcNAc...) asparagine glycan.

The protein belongs to the glycosyl hydrolase 67 family.

The protein localises to the secreted. It carries out the reaction an alpha-D-glucuronoside + H2O = D-glucuronate + an alcohol. Functionally, alpha-glucuronidase involved in the hydrolysis of xylan, a major structural heterogeneous polysaccharide found in plant biomass representing the second most abundant polysaccharide in the biosphere, after cellulose. Releases 4-O-methylglucuronic acid from xylan. The protein is Probable alpha-glucuronidase A (aguA) of Aspergillus niger.